We begin with the raw amino-acid sequence, 410 residues long: Thyroid hormone receptor alpha (410 aa).

The segment at 1 to 32 (MEQKPSKVECGSDPEESSTRSPDGKRKRKNGQ) is disordered. The segment at 1–52 (MEQKPSKVECGSDPEESSTRSPDGKRKRKNGQCSLKTSMSGYIPSYLDKDEQ) is modulating. 8 residues coordinate Zn(2+): Cys-53, Cys-56, Cys-70, Cys-73, Cys-91, Cys-97, Cys-107, and Cys-110. 2 NR C4-type zinc fingers span residues 53–73 (CVVC…CEGC) and 91–115 (CKYD…FKKC). Residues 53-127 (CVVCGDKATG…VGMAMDLVLD (75 aa)) constitute a DNA-binding region (nuclear receptor). Residues 163–407 (EEWDLIHVAT…PPLFLEVFED (245 aa)) form the NR LBD domain. 3,3',5-triiodo-L-thyronine contacts are provided by Arg-228 and Ser-277.

Belongs to the nuclear hormone receptor family. NR1 subfamily. In terms of assembly, binds DNA as a dimer; homodimer and heterodimer with RXRB. Interacts with NCOA3 and NCOA6 coactivators, leading to a strong increase of transcription of target genes. Probably interacts with SFPQ. Interacts with C1D. Interacts with AKAP13. Interacts with TP53INP2. Interacts with PER2. Interacts with TACC1. The interaction with isoform alpha-1, but not alpha-2, is decreased in the presence of thyroid hormone T3.

Its subcellular location is the nucleus. The protein resides in the cytoplasm. Nuclear hormone receptor that can act as a repressor or activator of transcription. High affinity receptor for thyroid hormones, including triiodothyronine and thyroxine. The polypeptide is Thyroid hormone receptor alpha (THRA) (Ovis aries (Sheep)).